A 226-amino-acid chain; its full sequence is 2-C-methyl-D-erythritol 4-phosphate cytidylyltransferase (226 aa).

This sequence belongs to the IspD/TarI cytidylyltransferase family. IspD subfamily.

It carries out the reaction 2-C-methyl-D-erythritol 4-phosphate + CTP + H(+) = 4-CDP-2-C-methyl-D-erythritol + diphosphate. Its pathway is isoprenoid biosynthesis; isopentenyl diphosphate biosynthesis via DXP pathway; isopentenyl diphosphate from 1-deoxy-D-xylulose 5-phosphate: step 2/6. Functionally, catalyzes the formation of 4-diphosphocytidyl-2-C-methyl-D-erythritol from CTP and 2-C-methyl-D-erythritol 4-phosphate (MEP). This chain is 2-C-methyl-D-erythritol 4-phosphate cytidylyltransferase, found in Microcystis aeruginosa (strain NIES-843 / IAM M-2473).